A 547-amino-acid polypeptide reads, in one-letter code: Leiomodin-2 (547 aa).

An interaction with tropomyosin alpha region spans residues 1-47; that stretch reads MSTFGYRRGLSKYESIDEDELLASLSAEELKELERELEDIEPDRNLP. Interaction with actin stretches follow at residues 1 to 161, 162 to 497, and 521 to 540; these read MSTF…SDNS, KPKI…KEIK, and AHEN…LKRV. 3 positions are modified to phosphoserine: Ser11, Ser15, and Ser24. Residues 16-41 are a coiled coil; the sequence is IDEDELLASLSAEELKELERELEDIE. Disordered stretches follow at residues 91-162 and 352-533; these read KVAE…DNSK and MDKQ…RGSS. 2 stretches are compositionally biased toward acidic residues: residues 95–104 and 112–139; these read DKEESEEELI and VSEE…EEER. A coiled-coil region spans residues 113-148; sequence SEEVYTEEEEEESQEEEEEEDSDEEERTIETAKGIN. Positions 149–160 are enriched in polar residues; it reads GTVNYDSVNSDN. Residues 352-367 are compositionally biased toward basic and acidic residues; that stretch reads MDKQRQKRLQEQKQQE. Ser400 carries the phosphoserine modification. The span at 419-449 shows a compositional bias: pro residues; the sequence is ATPPPPPPPPPPPPPSSQRLPPPPPPPPPPL. Polar residues predominate over residues 465–475; it reads QQESAQRALQN. The span at 477-487 shows a compositional bias: basic residues; the sequence is QKKKKGKKVKK. Basic and acidic residues predominate over residues 494 to 512; the sequence is KEIKNSLRSVQEKKMEDSS. The 20-residue stretch at 521-540 folds into the WH2 domain; it reads AHENLMEAIRGSSIKQLKRV.

This sequence belongs to the tropomodulin family. In terms of assembly, can bind at least three actin monomers and thereby provides a nucleus for actin filament formation. Interacts (via N-terminus) with tropomyosin alpha (TPM1) (via N-terminus). May also interact with TPM2 (via N-terminus). Interacts with FLII. In terms of tissue distribution, specifically expressed in heart and skeletal muscles, with higher levels in heart (at protein level). Not expressed in other tissues.

Its subcellular location is the cytoplasm. It is found in the myofibril. It localises to the sarcomere. The protein localises to the m line. The protein resides in the cytoskeleton. Functionally, mediates nucleation of actin filaments and thereby promotes actin polymerization. Plays a role in the regulation of actin filament length. Required for normal sarcomere organization in the heart, and for normal heart function. The polypeptide is Leiomodin-2 (LMOD2) (Homo sapiens (Human)).